A 437-amino-acid chain; its full sequence is Aspartate--tRNA(Asp/Asn) ligase (437 aa).

L-aspartate is bound at residue glutamate 175. Residues 197–200 (QLYK) form an aspartate region. Arginine 219 is an L-aspartate binding site. ATP contacts are provided by residues 219-221 (RAE), 227-229 (RHL), and glutamate 360. 2 residues coordinate Mg(2+): glutamate 360 and serine 363. Residues serine 363 and arginine 367 each contribute to the L-aspartate site. Position 408–411 (408–411 (GAER)) interacts with ATP.

This sequence belongs to the class-II aminoacyl-tRNA synthetase family. Type 2 subfamily. Homodimer. Mg(2+) serves as cofactor.

It localises to the cytoplasm. It carries out the reaction tRNA(Asx) + L-aspartate + ATP = L-aspartyl-tRNA(Asx) + AMP + diphosphate. Its function is as follows. Aspartyl-tRNA synthetase with relaxed tRNA specificity since it is able to aspartylate not only its cognate tRNA(Asp) but also tRNA(Asn). Reaction proceeds in two steps: L-aspartate is first activated by ATP to form Asp-AMP and then transferred to the acceptor end of tRNA(Asp/Asn). The chain is Aspartate--tRNA(Asp/Asn) ligase from Methanothermobacter thermautotrophicus (strain ATCC 29096 / DSM 1053 / JCM 10044 / NBRC 100330 / Delta H) (Methanobacterium thermoautotrophicum).